We begin with the raw amino-acid sequence, 191 residues long: Cell division protein SepF (191 aa).

The disordered stretch occupies residues 21–96 (EVEEPAVASV…NQQPAQEKTT (76 aa)). Residues 25 to 56 (PAVASVKRQQDAAQPASQQQKAQSHQYHQSAS) are compositionally biased toward low complexity. 2 stretches are compositionally biased toward polar residues: residues 57–69 (RPSQ…GQNR) and 86–95 (HNQQPAQEKT).

It belongs to the SepF family. In terms of assembly, homodimer. Interacts with FtsZ.

Its subcellular location is the cytoplasm. Functionally, cell division protein that is part of the divisome complex and is recruited early to the Z-ring. Probably stimulates Z-ring formation, perhaps through the cross-linking of FtsZ protofilaments. Its function overlaps with FtsA. The chain is Cell division protein SepF from Streptococcus mutans serotype c (strain ATCC 700610 / UA159).